The chain runs to 189 residues: Interferon alpha-F (189 aa).

The signal sequence occupies residues 1 to 23; it reads MAPAWSLLLALLLLSCNAICSLG. 2 cysteine pairs are disulfide-bonded: Cys24–Cys122 and Cys52–Cys162.

The protein belongs to the alpha/beta interferon family.

It localises to the secreted. Its function is as follows. Produced by macrophages, IFN-alpha have antiviral activities. Interferon stimulates the production of two enzymes: a protein kinase and an oligoadenylate synthetase. In Bos taurus (Bovine), this protein is Interferon alpha-F (IFNAF).